The primary structure comprises 376 residues: Mitogen-activated protein kinase 2 (376 aa).

Residues 32–319 (YVPIKPIGRG…VTEALQHPYM (288 aa)) enclose the Protein kinase domain. ATP contacts are provided by residues 38-46 (IGRGAYGVV) and K61. The active-site Proton acceptor is D158. T191 carries the phosphothreonine modification. The short motif at 191 to 193 (TEY) is the TXY element. A Phosphotyrosine modification is found at Y193. Position 196 is a phosphothreonine (T196).

This sequence belongs to the protein kinase superfamily. CMGC Ser/Thr protein kinase family. MAP kinase subfamily. As to quaternary structure, interacts with MKK3. In terms of processing, dually phosphorylated on Thr-191 and Tyr-193, which activates the enzyme. Phosphorylated on Ser residue. In terms of tissue distribution, highest levels in the stem. Present in the leaf, root and flower, but not in seeds.

The enzyme catalyses L-seryl-[protein] + ATP = O-phospho-L-seryl-[protein] + ADP + H(+). It carries out the reaction L-threonyl-[protein] + ATP = O-phospho-L-threonyl-[protein] + ADP + H(+). Its activity is regulated as follows. Activated by threonine and tyrosine phosphorylation. The protein is Mitogen-activated protein kinase 2 (MPK2) of Arabidopsis thaliana (Mouse-ear cress).